Reading from the N-terminus, the 571-residue chain is Streptolysin O (571 aa).

An N-terminal signal peptide occupies residues 1 to 33 (MSNKKTFKKYSRVAGLLTAALIIGNLVTANAES). The disordered stretch occupies residues 30–108 (NAESNKQNTA…KKSEEDHTEE (79 aa)). A compositionally biased stretch (low complexity) spans 37–48 (NTASTETTTTNE). Basic and acidic residues-rich tracts occupy residues 50–68 (PKPE…KTDD) and 79–108 (APKE…HTEE). A run of 4 beta stranded transmembrane segments spans residues 260–273 (KSQI…NSKI), 280–289 (IDFKSISKGE), 358–367 (SNDVEAAFSA), and 375–387 (KTNG…LENS). Residues 529 to 539 (ECTGLAWEWWR) carry the Conserved undecapeptide motif. A Cholesterol binding motif is present at residues 561 to 562 (TL).

This sequence belongs to the cholesterol-dependent cytolysin family. In terms of assembly, homooligomeric pore complex of 35 to 50 subunits; when inserted in the host membrane.

The protein localises to the secreted. Its subcellular location is the host cell membrane. Functionally, a cholesterol-dependent toxin that causes cytolysis by forming pores in cholesterol containing host membranes. After binding to target membranes, the protein undergoes a major conformation change, leading to its insertion in the host membrane and formation of an oligomeric pore complex. Cholesterol is required for binding to host membranes, membrane insertion and pore formation; cholesterol binding is mediated by a Thr-Leu pair in the C-terminus. Can be reversibly inactivated by oxidation. The protein is Streptolysin O (slo) of Streptococcus pyogenes serotype M3 (strain ATCC BAA-595 / MGAS315).